A 318-amino-acid polypeptide reads, in one-letter code: Glycerol 2-dehydrogenase (NADP(+)) (318 aa).

Tyr52 serves as the catalytic Proton donor. A substrate-binding site is contributed by His115. 217–277 (SPLGSQNQVP…SSTPSRIESN (61 aa)) is a binding site for NADP(+).

Belongs to the aldo/keto reductase family.

The catalysed reaction is glycerol + NADP(+) = dihydroxyacetone + NADPH + H(+). Functionally, glycerol oxidoreductase probably involved in glycerol synthesis. This Hypocrea jecorina (Trichoderma reesei) protein is Glycerol 2-dehydrogenase (NADP(+)) (gld2).